A 519-amino-acid chain; its full sequence is Cytosol aminopeptidase (519 aa).

The residue at position 45 (K45) is an N6-succinyllysine. Position 54 is a phosphoserine (S54). An N6-succinyllysine mark is found at K61 and K103. S180 and S194 each carry phosphoserine. Positions 202 and 203 each coordinate Zn(2+). K221 carries the post-translational modification N6-acetyllysine; alternate. K221 is subject to N6-succinyllysine; alternate. Phosphoserine is present on S238. Residues K282 and D287 each contribute to the Zn(2+) site. Substrate is bound by residues K282, D287, S292, and K294. D287 contacts Mg(2+). K294 is a catalytic residue. Zn(2+)-binding residues include R303, D305, D364, and E366. Residues D305 and D364 each contribute to the substrate site. Mg(2+)-binding residues include D364 and E366. R368 is a catalytic residue. N6-acetyllysine; alternate is present on K455. An N6-succinyllysine; alternate modification is found at K455. K476 is subject to N6-succinyllysine. Position 489 is an N6-acetyllysine; alternate (K489). At K489 the chain carries N6-succinyllysine; alternate.

Belongs to the peptidase M17 family. As to quaternary structure, homohexamer. It depends on Zn(2+) as a cofactor. Mn(2+) is required as a cofactor.

It is found in the cytoplasm. It carries out the reaction Release of an N-terminal amino acid, Xaa-|-Yaa-, in which Xaa is preferably Leu, but may be other amino acids including Pro although not Arg or Lys, and Yaa may be Pro. Amino acid amides and methyl esters are also readily hydrolyzed, but rates on arylamides are exceedingly low.. The enzyme catalyses an S-substituted L-cysteinylglycine + H2O = an S-substituted L-cysteine + glycine. The catalysed reaction is L-cysteinylglycine + H2O = L-cysteine + glycine. It catalyses the reaction S-benzyl-L-cysteinylglycine + H2O = S-benzyl-L-cysteine + glycine. It carries out the reaction Release of N-terminal proline from a peptide.. Cytosolic metallopeptidase that catalyzes the removal of unsubstituted N-terminal hydrophobic amino acids from various peptides. The presence of Zn(2+) ions is essential for the peptidase activity, and the association with other cofactors can modulate the substrate spectificity of the enzyme. For instance, in the presence of Mn(2+), it displays a specific Cys-Gly hydrolyzing activity of Cys-Gly-S-conjugates. Involved in the metabolism of glutathione and in the degradation of glutathione S-conjugates, which may play a role in the control of the cell redox status. In Mus musculus (Mouse), this protein is Cytosol aminopeptidase.